The primary structure comprises 946 residues: DNA ligase 4 (946 aa).

The ATP site is built by Glu-295, Lys-297, Arg-302, Glu-355, Phe-397, Glu-457, Lys-462, Lys-479, and Lys-481. Residue Lys-297 is the N6-AMP-lysine intermediate of the active site. Glu-355 serves as a coordination point for Mg(2+). Mg(2+) is bound at residue Glu-457. BRCT domains are found at residues 688–787 (HRSD…PSHC) and 845–945 (VPHF…NYRL).

Belongs to the ATP-dependent DNA ligase family. It depends on Mg(2+) as a cofactor.

It is found in the nucleus. It carries out the reaction ATP + (deoxyribonucleotide)n-3'-hydroxyl + 5'-phospho-(deoxyribonucleotide)m = (deoxyribonucleotide)n+m + AMP + diphosphate.. In terms of biological role, DNA ligase involved in DNA non-homologous end joining (NHEJ); required for double-strand break (DSB) repair. The chain is DNA ligase 4 (LIG4) from Candida glabrata (strain ATCC 2001 / BCRC 20586 / JCM 3761 / NBRC 0622 / NRRL Y-65 / CBS 138) (Yeast).